The sequence spans 76 residues: Exodeoxyribonuclease 7 small subunit (76 aa).

Belongs to the XseB family. Heterooligomer composed of large and small subunits.

The protein resides in the cytoplasm. It carries out the reaction Exonucleolytic cleavage in either 5'- to 3'- or 3'- to 5'-direction to yield nucleoside 5'-phosphates.. Its function is as follows. Bidirectionally degrades single-stranded DNA into large acid-insoluble oligonucleotides, which are then degraded further into small acid-soluble oligonucleotides. The polypeptide is Exodeoxyribonuclease 7 small subunit (Staphylococcus haemolyticus (strain JCSC1435)).